Reading from the N-terminus, the 446-residue chain is T-box transcription factor TBX20 (446 aa).

The tract at residues 50-80 (SCHPNLGDLPPLETHSDFSSGGGTGSGAPLC) is disordered. The segment at residues 108 to 287 (LWDKFHELGT…SNPFAKGFRD (180 aa)) is a DNA-binding region (T-box).

It localises to the nucleus. Functionally, transcriptional regulator that may play a very early role in the differentiation of the cardiac precursors. The polypeptide is T-box transcription factor TBX20 (tbx20) (Danio rerio (Zebrafish)).